Consider the following 439-residue polypeptide: FAD-linked oxidoreductase phmC (439 aa).

The N-terminal stretch at 1-19 is a signal peptide; that stretch reads MLSSILLTIFCAFLSSTGA. N-linked (GlcNAc...) asparagine glycosylation is found at Asn-29 and Asn-84. Residues 89-272 enclose the FAD-binding PCMH-type domain; it reads QGSVPSYYIQ…LSTTTRVEPK (184 aa). Residues Asn-285 and Asn-300 are each glycosylated (N-linked (GlcNAc...) asparagine).

This sequence belongs to the oxygen-dependent FAD-linked oxidoreductase family. FAD serves as cofactor.

It functions in the pathway mycotoxin biosynthesis. Functionally, FAD-linked oxidoreductase; part of the gene cluster that mediates the biosynthesis of the mycotoxins phomacins, leucine-derived cytochalasans with potent actin polymerization-inhibitory activities and monocot-specific antigerminative activities. The first step in the pathway is catalyzed by the hybrid PKS-NRPS phmA, assisted by the enoyl reductase phmE, that are responsible for fusion of the leucine precursor and the polyketide backbone to produce a 2-pyrrolidone intermediate. The polyketide synthase module (PKS) of phmA is responsible for the synthesis of the polyketide backbone and the downstream nonribosomal peptide synthetase (NRPS) amidates the carboxyl end of the polyketide with the leucine precursor. Because phmA lacks a designated enoylreductase (ER) domain, the required activity is provided the enoyl reductase phmE. Reduction by the hydrolyase phmG, followed by dehydration and intra-molecular Diels-Alder cyclization by the Diels-Alderase phmD then yield the required isoindolone-fused macrocycle. A number of oxidative steps catalyzed by the tailoring cytochrome P450 monooxygenase phmB, the FAD-linked oxidoreductase phmC and the short-chain dehydrogenase/reductase phmF, are further required to afford the final products, phomacin D and phomacin E. This is FAD-linked oxidoreductase phmC from Phaeosphaeria nodorum (strain SN15 / ATCC MYA-4574 / FGSC 10173) (Glume blotch fungus).